Reading from the N-terminus, the 108-residue chain is Precursor of CEP16 (108 aa).

A signal peptide spans 1 to 27; sequence MVMAKNLTKFYVVFLVVLMMVVSLLLA. Residues 28-92 constitute a propeptide that is removed on maturation; that stretch reads IEGRPVKDSS…VGHHRAKGYK (65 aa). Asn-50 and Asn-98 each carry an N-linked (GlcNAc...) asparagine glycan. The interval 76 to 108 is disordered; it reads QSGPSPGVGHHRAKGYKMFGRANDSGPSPGVGH. Hydroxyproline occurs at positions 102 and 104.

This sequence belongs to the C-terminally encoded plant signaling peptide (CEP) family. As to quaternary structure, interacts with CEP receptors (e.g. CEPR1 and CEPR2). Post-translationally, the mature small signaling peptide is generated by proteolytic processing of the longer precursor.

It localises to the secreted. The protein resides in the extracellular space. The protein localises to the apoplast. In terms of biological role, extracellular signaling peptide that may regulate primary root growth rate and systemic nitrogen (N)-demand signaling. This chain is Precursor of CEP16, found in Arabidopsis thaliana (Mouse-ear cress).